A 126-amino-acid polypeptide reads, in one-letter code: Methylglyoxal synthase (126 aa).

In terms of domain architecture, MGS-like spans 1-126 (MAGSKCLALI…AIKLLPTLEA (126 aa)). Substrate is bound by residues His-12, Lys-16, 38–41 (TGTT), and 59–60 (SG). Asp-65 (proton donor/acceptor) is an active-site residue. His-92 serves as a coordination point for substrate.

Belongs to the methylglyoxal synthase family.

The catalysed reaction is dihydroxyacetone phosphate = methylglyoxal + phosphate. Functionally, catalyzes the formation of methylglyoxal from dihydroxyacetone phosphate. This chain is Methylglyoxal synthase, found in Rhizobium etli (strain ATCC 51251 / DSM 11541 / JCM 21823 / NBRC 15573 / CFN 42).